The chain runs to 112 residues: Large ribosomal subunit protein uL18 (112 aa).

This sequence belongs to the universal ribosomal protein uL18 family. In terms of assembly, part of the 50S ribosomal subunit; part of the 5S rRNA/L5/L18/L25 subcomplex. Contacts the 5S and 23S rRNAs.

In terms of biological role, this is one of the proteins that bind and probably mediate the attachment of the 5S RNA into the large ribosomal subunit, where it forms part of the central protuberance. This is Large ribosomal subunit protein uL18 from Thermus thermophilus (strain ATCC BAA-163 / DSM 7039 / HB27).